The following is a 772-amino-acid chain: NAD(P)H-quinone oxidoreductase subunit 5, chloroplastic (772 aa).

The next 15 membrane-spanning stretches (helical) occupy residues 8–28, 39–59, 87–107, 120–140, 147–167, 185–205, 219–239, 258–278, 291–311, 395–415, 425–445, 574–594, 631–651, 710–730, and 738–758; these read IWIV…GLFF, ICAI…FSIF, FLID…GILV, GYVR…GLVL, IYIF…FWFS, GDFG…SFDI, NGVN…GPAA, TPIS…FFVA, MNII…IALA, GTTF…ACFW, WIAS…TGFY, LFSL…GVPF, IPSV…YGPV, WIID…GEGM, and IPSY…ILII.

Belongs to the complex I subunit 5 family. NDH is composed of at least 16 different subunits, 5 of which are encoded in the nucleus.

It localises to the plastid. It is found in the chloroplast thylakoid membrane. The catalysed reaction is a plastoquinone + NADH + (n+1) H(+)(in) = a plastoquinol + NAD(+) + n H(+)(out). It carries out the reaction a plastoquinone + NADPH + (n+1) H(+)(in) = a plastoquinol + NADP(+) + n H(+)(out). In terms of biological role, NDH shuttles electrons from NAD(P)H:plastoquinone, via FMN and iron-sulfur (Fe-S) centers, to quinones in the photosynthetic chain and possibly in a chloroplast respiratory chain. The immediate electron acceptor for the enzyme in this species is believed to be plastoquinone. Couples the redox reaction to proton translocation, and thus conserves the redox energy in a proton gradient. The chain is NAD(P)H-quinone oxidoreductase subunit 5, chloroplastic (ndhF) from Angiopteris evecta (Mule's foot fern).